The primary structure comprises 286 residues: Probable 4-deoxy-4-formamido-L-arabinose-phosphoundecaprenol deformylase ArnD (286 aa).

The 248-residue stretch at 1–248 folds into the NodB homology domain; it reads MGTKLGVPNL…IAINEGINFC (248 aa).

The protein belongs to the polysaccharide deacetylase family. ArnD deformylase subfamily.

It carries out the reaction 4-deoxy-4-formamido-alpha-L-arabinopyranosyl di-trans,octa-cis-undecaprenyl phosphate + H2O = 4-amino-4-deoxy-alpha-L-arabinopyranosyl di-trans,octa-cis-undecaprenyl phosphate + formate. The protein operates within glycolipid biosynthesis; 4-amino-4-deoxy-alpha-L-arabinose undecaprenyl phosphate biosynthesis; 4-amino-4-deoxy-alpha-L-arabinose undecaprenyl phosphate from UDP-4-deoxy-4-formamido-beta-L-arabinose and undecaprenyl phosphate: step 2/2. It participates in bacterial outer membrane biogenesis; lipopolysaccharide biosynthesis. In terms of biological role, catalyzes the deformylation of 4-deoxy-4-formamido-L-arabinose-phosphoundecaprenol to 4-amino-4-deoxy-L-arabinose-phosphoundecaprenol. The modified arabinose is attached to lipid A and is required for resistance to polymyxin and cationic antimicrobial peptides. This Wigglesworthia glossinidia brevipalpis protein is Probable 4-deoxy-4-formamido-L-arabinose-phosphoundecaprenol deformylase ArnD.